A 429-amino-acid polypeptide reads, in one-letter code: Light-independent protochlorophyllide reductase subunit N (429 aa).

Positions 32, 57, and 118 each coordinate [4Fe-4S] cluster.

This sequence belongs to the BchN/ChlN family. Protochlorophyllide reductase is composed of three subunits; BchL, BchN and BchB. Forms a heterotetramer of two BchB and two BchN subunits. Requires [4Fe-4S] cluster as cofactor.

The enzyme catalyses chlorophyllide a + oxidized 2[4Fe-4S]-[ferredoxin] + 2 ADP + 2 phosphate = protochlorophyllide a + reduced 2[4Fe-4S]-[ferredoxin] + 2 ATP + 2 H2O. The protein operates within porphyrin-containing compound metabolism; bacteriochlorophyll biosynthesis (light-independent). Functionally, component of the dark-operative protochlorophyllide reductase (DPOR) that uses Mg-ATP and reduced ferredoxin to reduce ring D of protochlorophyllide (Pchlide) to form chlorophyllide a (Chlide). This reaction is light-independent. The NB-protein (BchN-BchB) is the catalytic component of the complex. In Rhodopseudomonas palustris (strain TIE-1), this protein is Light-independent protochlorophyllide reductase subunit N.